Consider the following 285-residue polypeptide: Putative L(+)-tartrate dehydratase subunit alpha (285 aa).

Residues cysteine 60, cysteine 182, and cysteine 269 each contribute to the iron-sulfur cluster site.

Belongs to the class-I fumarase family. As to quaternary structure, tetramer of two alpha and two beta subunits. Iron-sulfur cluster serves as cofactor.

The catalysed reaction is (2R,3R)-tartrate = oxaloacetate + H2O. The chain is Putative L(+)-tartrate dehydratase subunit alpha from Methanocaldococcus jannaschii (strain ATCC 43067 / DSM 2661 / JAL-1 / JCM 10045 / NBRC 100440) (Methanococcus jannaschii).